The chain runs to 145 residues: Hemoglobin subunit beta-2 (145 aa).

One can recognise a Globin domain in the interval 2–145 (HLTDQEIKYI…VADAVGKGYH (144 aa)). Positions 63 and 91 each coordinate heme b.

It belongs to the globin family. In terms of tissue distribution, red blood cells.

The chain is Hemoglobin subunit beta-2 from Telmatobius peruvianus (Andean frog).